The primary structure comprises 511 residues: 4,4'-diapophytoene desaturase (4,4'-diapolycopene-forming) (511 aa).

Belongs to the carotenoid/retinoid oxidoreductase family.

The catalysed reaction is 15-cis-4,4'-diapophytoene + 4 FAD + 4 H(+) = all-trans-4,4'-diapolycopene + 4 FADH2. It participates in carotenoid biosynthesis. In terms of biological role, involved in the biosynthesis of C30 carotenoids. Catalyzes four successive dehydrogenation reactions that lead to the introduction of four double bonds into 4,4'-diapophytoene (dehydrosqualene) to yield 4,4'-diapolycopene. The sequence is that of 4,4'-diapophytoene desaturase (4,4'-diapolycopene-forming) from Methylomonas sp.